Reading from the N-terminus, the 509-residue chain is 2,3-bisphosphoglycerate-independent phosphoglycerate mutase (509 aa).

Aspartate 13 and serine 63 together coordinate Mn(2+). Serine 63 functions as the Phosphoserine intermediate in the catalytic mechanism. Substrate is bound by residues histidine 124, 154–155 (RD), arginine 186, arginine 192, 261–264 (RPDR), and lysine 335. Mn(2+)-binding residues include aspartate 400, histidine 404, aspartate 441, histidine 442, and histidine 459.

This sequence belongs to the BPG-independent phosphoglycerate mutase family. As to quaternary structure, monomer. Requires Mn(2+) as cofactor.

The catalysed reaction is (2R)-2-phosphoglycerate = (2R)-3-phosphoglycerate. Its pathway is carbohydrate degradation; glycolysis; pyruvate from D-glyceraldehyde 3-phosphate: step 3/5. Its function is as follows. Catalyzes the interconversion of 2-phosphoglycerate and 3-phosphoglycerate. The polypeptide is 2,3-bisphosphoglycerate-independent phosphoglycerate mutase (Desulforudis audaxviator (strain MP104C)).